The chain runs to 2603 residues: Squalestatin tetraketide synthase (2603 aa).

Residues 29 to 455 form the Ketosynthase family 3 (KS3) domain; that stretch reads TIPIAIIGMS…GANAHVILES (427 aa). Catalysis depends on for beta-ketoacyl synthase activity residues cysteine 202, histidine 337, and histidine 377. Positions 463-512 are disordered; it reads IANGSGRSNGTGNGHNGANGTTNGHNGTNGTTNGHFDATQATNGHYGTDE. Residues 469 to 479 are compositionally biased toward gly residues; that stretch reads RSNGTGNGHNG. Residues 480–497 are compositionally biased toward low complexity; it reads ANGTTNGHNGTNGTTNGH. Residues 608–931 form a malonyl-CoA:ACP transacylase (MAT) domain region; it reads VFTGQGAQWF…PYISCLLRGQ (324 aa). The interval 1000-1138 is N-terminal hotdog fold; it reads HDLLGSLIVG…GRITIEFDTS (139 aa). A PKS/mFAS DH domain is found at 1000-1314; that stretch reads HDLLGSLIVG…NQSVGQMAPQ (315 aa). The interval 1000-1314 is dehydratase (DH) domain; sequence HDLLGSLIVG…NQSVGQMAPQ (315 aa). Histidine 1032 functions as the Proton acceptor; for dehydratase activity in the catalytic mechanism. A C-terminal hotdog fold region spans residues 1157–1314; the sequence is LMRSVDPSNL…NQSVGQMAPQ (158 aa). Aspartate 1223 serves as the catalytic Proton donor; for dehydratase activity. Residues 1465–1665 form a methyltransferase (CMet) domain region; it reads LYRYYTDAIK…GLDIELRDCD (201 aa). The enoyl reductase (ER) (ER) domain stretch occupies residues 1892 to 2205; it reads GLIDTLQFSK…AGKHMGKIVI (314 aa). The ketoreductase (KR) domain stretch occupies residues 2228 to 2406; sequence ASYLIVGGLG…AVSIDLGMVQ (179 aa). Positions 2516–2593 constitute a Carrier domain; that stretch reads EAIDVVGRAI…ALATTVATKS (78 aa). Position 2553 is an O-(pantetheine 4'-phosphoryl)serine (serine 2553).

Its pathway is secondary metabolite biosynthesis. Its function is as follows. Highly reducing polyketide synthase (HR-PKS); part of the gene cluster that mediates the biosynthesis of squalestatin S1 (SQS1, also known as zaragozic acid A), a lead compound for the treatment of hyper-cholesterolemia by targeting squalene synthase (SS). Pks1 is responsible for the biosynthesis of the tetraketide sidechain of SQS1. The biosynthesis must involve 3 rounds of chain extension. After the first and second rounds methyl-transfer occurs, and in all rounds of extension the ketoreductase and dehydratase are active. The enoyl reductase and C-MeT are not active in the final round of extension. The protein is Squalestatin tetraketide synthase of Phoma sp. (strain C2932).